The primary structure comprises 414 residues: 2,3-diketo-5-methylthiopentyl-1-phosphate enolase (414 aa).

Catalysis depends on Lys-99, which acts as the Proton acceptor. Substrate-binding positions include Lys-148, 174 to 177 (KDDE), His-265, Gly-338, and 360 to 361 (GG). Mg(2+)-binding residues include Lys-174, Asp-176, and Glu-177. Lys-174 carries the post-translational modification N6-carboxylysine.

It belongs to the RuBisCO large chain family. Type IV subfamily. Homodimer. It depends on Mg(2+) as a cofactor.

It carries out the reaction 5-methylsulfanyl-2,3-dioxopentyl phosphate = 2-hydroxy-5-methylsulfanyl-3-oxopent-1-enyl phosphate. Its pathway is amino-acid biosynthesis; L-methionine biosynthesis via salvage pathway; L-methionine from S-methyl-5-thio-alpha-D-ribose 1-phosphate: step 3/6. Catalyzes the enolization of 2,3-diketo-5-methylthiopentyl-1-phosphate (DK-MTP-1-P) into 2-hydroxy-3-keto-5-methylthiopentenyl-1-phosphate (HK-MTPenyl-1-P). The polypeptide is 2,3-diketo-5-methylthiopentyl-1-phosphate enolase (Bacillus cereus (strain G9842)).